Reading from the N-terminus, the 1311-residue chain is MSSEPTSSIESDNLRRSKRKKFKLDFVAAAHGNNQKKSRKDPHGQGDDDDDTFDDDLNHFEPLSVLTEQDVSMEMFEDDEEDTVSRRRTRRSTAHFQDYQEPDRWIENSGPHACHKCPSRYESKSSLANHTKMHLGEKRKFACELCDFSASTLKSLTHHNNIHQNFGVLSQQTSPVIPVASSADSTLNSSINSTGCQINAPPAPKLDEEAPIAVESVVVHHEDVAEFDTTPPPILEREDDGPPVLIREAPVRKSNRPMKPTQKAQKMTKQRERKSKTVESPKGSLPSSSASSVTPPPVRKDVEKPKIFVKTTKKNLKKTMKITKVRQRCPHCPFTTSTVTRLNRHSGGHKLKEGYICPSENCNFMCRKAGFLQKHYILHKGTLPWPPEYVKKGGAKMKRTFPESEEKKIEVTEKVQKMKKMHKRRANTVQVVAKAQLKSYIKVEVDDVIFKKCNIGECEFLTQTLTQLIVHKVKTHDTKTAFPQHRFLCLTCGHRAKSYAALRTHKLIEHTSTHKRFHRTYYLKECVGDKFFVKYNLSKVQEEVKEEPKEADGDESGDESFDSMCPASDVHPETLAAIEMKDVFFCCNMCPYKAPTMNRCQRHYDKHFKNDEFKCQYCSWSSRSKEVIVNHEKLHPTVVVANTNEAPVVKNEIEAKVEVLSKTVSSPVECTEESSLSKSIQLWCQREKLRHPELDEQFTRKMIDGVKGFQCTDCPYTSKYRGDMRSHKKRHDIEQLYRCVQCTYTTNRPVSLKDHLKQHAIVNMSIADIKSRRVVVNQGVKIGMRRGVGKDKIYCCDKCPYVTLALGCLWRHHRNHRDTAKINICSNCSYSSIDQRKMEEHTIIHLGLGLNEAVPFVKRVDQKGRPVSSLTDLNSEKMNERKSTKRKMLDKVEKMEVGEDEEDDEESVDKGTDDGDYKQRPEKKRKQSSEEPASDPELFGSSSQPTRQLSERATRNRINYSLLSKNGSGKPTPSTSSANLEKLAGSSGGASSESPEPDESVEVSHWKIRTFLRSEYGVKESLKCPDCPYKSSEPDVLEKHRYYHMTKTTPRPYACSDCTFNTYTPTALLQHLKLHSEGVYFDPMVKKHMKHRKGDSIPPGVKGYYCKNCSFKTSIHRNFIEHSAYHRQQLINRINITLKRQPPRIEYQRPKLKHQFVAKNAKYCKKCTFKCVSQSNFIEHLDRHGWNQLYKCYSCDYSDNTKSVVDFHQLNHHIVKDQTLHSICQSAKFRLENGVIQIPEFQTEKSKPTPDEFVSKTRGLLKCPSCEYFCHVSSELAFHMSVHHLTEPNARETISYLHMGLVPPKATVTTV.

Residues 1–11 (MSSEPTSSIES) are compositionally biased toward polar residues. 2 disordered regions span residues 1 to 58 (MSSE…DDLN) and 75 to 95 (MFEDDEEDTVSRRRTRRSTAH). 2 C2H2-type zinc fingers span residues 112–134 (HACHKCPSRYESKSSLANHTKMH) and 141–163 (FACELCDFSASTLKSLTHHNNIH). Positions 226-304 (EFDTTPPPIL…PPPVRKDVEK (79 aa)) are disordered. A compositionally biased stretch (low complexity) spans 280 to 293 (SPKGSLPSSSASSV). C2H2-type zinc fingers lie at residues 327 to 349 (QRCPHCPFTTSTVTRLNRHSGGH), 355 to 379 (YICPSENCNFMCRKAGFLQKHYILH), 451 to 476 (KKCNIGECEFLTQTLTQLIVHKVKTH), and 487 to 510 (FLCLTCGHRAKSYAALRTHKLIEH). The interval 544–563 (VKEEPKEADGDESGDESFDS) is disordered. Acidic residues predominate over residues 552–561 (DGDESGDESF). 6 C2H2-type zinc fingers span residues 585–607 (FCCNMCPYKAPTMNRCQRHYDKH), 613–635 (FKCQYCSWSSRSKEVIVNHEKLH), 709–731 (FQCTDCPYTSKYRGDMRSHKKRH), 737–759 (YRCVQCTYTTNRPVSLKDHLKQH), 794–816 (YCCDKCPYVTLALGCLWRHHRNH), and 823–845 (NICSNCSYSSIDQRKMEEHTIIH). Positions 865-1002 (RPVSSLTDLN…ESPEPDESVE (138 aa)) are disordered. The span at 874 to 897 (NSEKMNERKSTKRKMLDKVEKMEV) shows a compositional bias: basic and acidic residues. Residues 898 to 907 (GEDEEDDEES) are compositionally biased toward acidic residues. Over residues 908–920 (VDKGTDDGDYKQR) the composition is skewed to basic and acidic residues. Over residues 956–979 (NRINYSLLSKNGSGKPTPSTSSAN) the composition is skewed to polar residues. 6 consecutive C2H2-type zinc fingers follow at residues 1022 to 1044 (LKCPDCPYKSSEPDVLEKHRYYH), 1053 to 1075 (YACSDCTFNTYTPTALLQHLKLH), 1104 to 1126 (YYCKNCSFKTSIHRNFIEHSAYH), 1162 to 1184 (KYCKKCTFKCVSQSNFIEHLDRH), 1190 to 1212 (YKCYSCDYSDNTKSVVDFHQLNH), and 1261 to 1284 (LKCPSCEYFCHVSSELAFHMSVHH).

As to expression, expressed in neurons.

Its subcellular location is the nucleus. In terms of biological role, probable transcriptional regulator, which participates in the transcriptional repression of the presenilin protein hop-1. Might play a role in the oxidative stress response. The sequence is that of Suppressor of presenilin protein 4 (spr-4) from Caenorhabditis elegans.